Reading from the N-terminus, the 261-residue chain is HLA class II histocompatibility antigen, DM alpha chain (261 aa).

Positions 1-26 (MGHEQNQGAALLQMLPLLWLLPHSWA) are cleaved as a signal peptide. The alpha-1 stretch occupies residues 27–124 (VPEAPTPMWP…KLDGKIPVSR (98 aa)). Topologically, residues 27 to 233 (VPEAPTPMWP…PSDLLENVLC (207 aa)) are lumenal. Asn-41 is a glycosylation site (N-linked (GlcNAc...) asparagine). Disulfide bonds link Cys-50/Cys-105 and Cys-147/Cys-202. In terms of domain architecture, Ig-like C1-type spans 121 to 215 (PVSRGFPIAE…HEIDRYTAIA (95 aa)). The segment at 125–217 (GFPIAEVFTL…IDRYTAIAYW (93 aa)) is alpha-2. Residues 218 to 233 (VPRNALPSDLLENVLC) are connecting peptide. The chain crosses the membrane as a helical span at residues 234–254 (GVAFGLGVLGIIVGIVLIIYF). At 255–261 (RKPCSGD) the chain is on the cytoplasmic side.

Belongs to the MHC class II family. As to quaternary structure, heterodimer of an alpha chain (DMA) and a beta chain (DMB). Interacts with MHCII; this interaction mediates rapid selection of high-affinity peptides in a pH-dependent manner, with an optimum at pH 5.5.

It is found in the late endosome membrane. The protein localises to the lysosome membrane. Its function is as follows. Plays a critical role in catalyzing the release of class II-associated invariant chain peptide (CLIP) from newly synthesized MHC class II molecules and freeing the peptide binding site for acquisition of antigenic peptides. In B-cells, the interaction between HLA-DM and MHC class II molecules is regulated by HLA-DO. The chain is HLA class II histocompatibility antigen, DM alpha chain (HLA-DMA) from Homo sapiens (Human).